The primary structure comprises 452 residues: General transcription and DNA repair factor IIH subunit TFB2 (452 aa).

Belongs to the TFB2 family. As to quaternary structure, component of the 7-subunit TFIIH core complex composed of XPB, XPD, TFB1/GTF2H1, GTF2H2/P44, TFB4/GTF2H3, TFB2/GTF2H4 and TFB5/GTF2H5, which is active in NER. The core complex associates with the 3-subunit CDK-activating kinase (CAK) module composed of CYCH1/cyclin H1, CDKD and MAT1/At4g30820 to form the 10-subunit holoenzyme (holo-TFIIH) active in transcription.

It is found in the nucleus. In terms of biological role, component of the general transcription and DNA repair factor IIH (TFIIH) core complex, which is involved in general and transcription-coupled nucleotide excision repair (NER) of damaged DNA and, when complexed to CAK, in RNA transcription by RNA polymerase II. In NER, TFIIH acts by opening DNA around the lesion to allow the excision of the damaged oligonucleotide and its replacement by a new DNA fragment. In transcription, TFIIH has an essential role in transcription initiation. When the pre-initiation complex (PIC) has been established, TFIIH is required for promoter opening and promoter escape. Phosphorylation of the C-terminal tail (CTD) of the largest subunit of RNA polymerase II by the kinase module CAK controls the initiation of transcription. This chain is General transcription and DNA repair factor IIH subunit TFB2, found in Arabidopsis thaliana (Mouse-ear cress).